A 273-amino-acid chain; its full sequence is Phosphatidylglycerol--prolipoprotein diacylglyceryl transferase (273 aa).

Transmembrane regions (helical) follow at residues 18–38 (IPVR…YVVG), 47–67 (LPED…IICA), 89–109 (IWNG…TAYI), and 116–136 (VSFL…QIIG). An a 1,2-diacyl-sn-glycero-3-phospho-(1'-sn-glycerol)-binding site is contributed by Arg137. Transmembrane regions (helical) follow at residues 178-198 (VHPT…ILLI), 207-227 (GEIF…IEGM), and 238-258 (LRSA…AIIY).

Belongs to the Lgt family.

The protein localises to the cell membrane. The enzyme catalyses L-cysteinyl-[prolipoprotein] + a 1,2-diacyl-sn-glycero-3-phospho-(1'-sn-glycerol) = an S-1,2-diacyl-sn-glyceryl-L-cysteinyl-[prolipoprotein] + sn-glycerol 1-phosphate + H(+). It participates in protein modification; lipoprotein biosynthesis (diacylglyceryl transfer). Catalyzes the transfer of the diacylglyceryl group from phosphatidylglycerol to the sulfhydryl group of the N-terminal cysteine of a prolipoprotein, the first step in the formation of mature lipoproteins. This chain is Phosphatidylglycerol--prolipoprotein diacylglyceryl transferase, found in Lysinibacillus sphaericus (strain C3-41).